The primary structure comprises 142 residues: HTH-type transcriptional regulator MntR (142 aa).

An HTH dtxR-type domain is found at Met-1–Thr-63. 6 residues coordinate Mn(2+): Asp-8, Glu-11, His-77, Glu-99, Glu-102, and His-103.

Belongs to the DtxR/MntR family. As to quaternary structure, homodimer.

It localises to the cytoplasm. Its activity is regulated as follows. DNA binding is strongly activated by Mn(2+). In terms of biological role, central regulator of manganese homeostasis. The chain is HTH-type transcriptional regulator MntR from Listeria welshimeri serovar 6b (strain ATCC 35897 / DSM 20650 / CCUG 15529 / CIP 8149 / NCTC 11857 / SLCC 5334 / V8).